A 324-amino-acid polypeptide reads, in one-letter code: Glyoxylate/hydroxypyruvate reductase B (324 aa).

Active-site residues include arginine 237 and glutamate 266. Histidine 285 (proton donor) is an active-site residue.

It belongs to the D-isomer specific 2-hydroxyacid dehydrogenase family. GhrB subfamily. Homodimer.

It localises to the cytoplasm. The catalysed reaction is glycolate + NADP(+) = glyoxylate + NADPH + H(+). It catalyses the reaction (R)-glycerate + NAD(+) = 3-hydroxypyruvate + NADH + H(+). The enzyme catalyses (R)-glycerate + NADP(+) = 3-hydroxypyruvate + NADPH + H(+). Its function is as follows. Catalyzes the NADPH-dependent reduction of glyoxylate and hydroxypyruvate into glycolate and glycerate, respectively. The sequence is that of Glyoxylate/hydroxypyruvate reductase B from Escherichia coli (strain ATCC 8739 / DSM 1576 / NBRC 3972 / NCIMB 8545 / WDCM 00012 / Crooks).